The sequence spans 283 residues: Peroxisome biogenesis protein 22 (283 aa).

Alanine 2 bears the N-acetylalanine mark. A helical transmembrane segment spans residues 45 to 62 (IGAIAGLAIAVIFTWRAI). A disordered region spans residues 66–107 (GEQRQRRQPKRRIHNAETSSAAAAASQSNLASSVAPEVSSPR). A compositionally biased stretch (low complexity) spans 81-100 (AETSSAAAAASQSNLASSVA).

The protein belongs to the peroxin-22 family. Interacts with PEX4.

It localises to the peroxisome membrane. Its function is as follows. May be tethered PEX4 to the peroxisome membrane and may be involved in a late step of the matrix protein import. Does not play a role in the biogenesis of the peroxisomal membrane. The sequence is that of Peroxisome biogenesis protein 22 (PEX22) from Arabidopsis thaliana (Mouse-ear cress).